The chain runs to 266 residues: Vitamin B12-binding protein (266 aa).

The signal sequence occupies residues 1-22 (MAKSLFRALVALSFLAPLWLNA). The Fe/B12 periplasmic-binding domain occupies 25–266 (RVITLSPANT…QLCNALSQVD (242 aa)). Cyanocob(III)alamin contacts are provided by residues Y50 and 242 to 246 (DWFER). A disulfide bond links C183 and C259.

It belongs to the BtuF family. The complex is composed of two ATP-binding proteins (BtuD), two transmembrane proteins (BtuC) and a solute-binding protein (BtuF).

It localises to the periplasm. In terms of biological role, part of the ABC transporter complex BtuCDF involved in vitamin B12 import. Binds vitamin B12 and delivers it to the periplasmic surface of BtuC. This is Vitamin B12-binding protein from Escherichia coli O6:H1 (strain CFT073 / ATCC 700928 / UPEC).